We begin with the raw amino-acid sequence, 95 residues long: Large ribosomal subunit protein uL23 (95 aa).

It belongs to the universal ribosomal protein uL23 family. In terms of assembly, part of the 50S ribosomal subunit. Contacts protein L29, and trigger factor when it is bound to the ribosome.

In terms of biological role, one of the early assembly proteins it binds 23S rRNA. One of the proteins that surrounds the polypeptide exit tunnel on the outside of the ribosome. Forms the main docking site for trigger factor binding to the ribosome. The protein is Large ribosomal subunit protein uL23 of Desulforamulus reducens (strain ATCC BAA-1160 / DSM 100696 / MI-1) (Desulfotomaculum reducens).